We begin with the raw amino-acid sequence, 54 residues long: Lectin alpha chain (54 aa).

This sequence belongs to the leguminous lectin family. In terms of assembly, tetramer of two alpha and two beta chains.

The polypeptide is Lectin alpha chain (Lathyrus tingitanus (Tangier pea)).